Consider the following 153-residue polypeptide: Superoxide dismutase [Cu-Zn] (153 aa).

Positions 45, 47, and 62 each coordinate Cu cation. The cysteines at positions 56 and 145 are disulfide-linked. Zn(2+) contacts are provided by His-62, His-70, His-79, and Asp-82. His-119 serves as a coordination point for Cu cation.

The protein belongs to the Cu-Zn superoxide dismutase family. Homodimer. It depends on Cu cation as a cofactor. The cofactor is Zn(2+).

It localises to the cytoplasm. The enzyme catalyses 2 superoxide + 2 H(+) = H2O2 + O2. Functionally, destroys radicals which are normally produced within the cells and which are toxic to biological systems. This is Superoxide dismutase [Cu-Zn] from Drosophila teissieri (Fruit fly).